We begin with the raw amino-acid sequence, 55 residues long: Large ribosomal subunit protein bL33m (55 aa).

The protein belongs to the bacterial ribosomal protein bL33 family. In terms of assembly, component of the mitochondrial large ribosomal subunit (mt-LSU). Mature yeast 74S mitochondrial ribosomes consist of a small (37S) and a large (54S) subunit. The 37S small subunit contains a 15S ribosomal RNA (15S mt-rRNA) and at least 32 different proteins. The 54S large subunit contains a 21S rRNA (21S mt-rRNA) and at least 45 different proteins. bL33m stabilizes the tRNA acceptor stem in the E-site.

Its subcellular location is the mitochondrion. Its function is as follows. Component of the mitochondrial ribosome (mitoribosome), a dedicated translation machinery responsible for the synthesis of mitochondrial genome-encoded proteins, including at least some of the essential transmembrane subunits of the mitochondrial respiratory chain. The mitoribosomes are attached to the mitochondrial inner membrane and translation products are cotranslationally integrated into the membrane. This Schizosaccharomyces pombe (strain 972 / ATCC 24843) (Fission yeast) protein is Large ribosomal subunit protein bL33m (mrpl39).